We begin with the raw amino-acid sequence, 138 residues long: Centromere protein S (138 aa).

Met1 is modified (N-acetylmethionine). The interval 112–138 (AKKKKKLEDENRNSVESAEAGVEESEN) is disordered.

The protein belongs to the TAF9 family. CENP-S/MHF1 subfamily. Heterodimer with CENPX, sometimes called MHF; this interaction stabilizes both partners. MHF heterodimers can assemble to form tetrameric structures. MHF also coassemble with CENPT-CENPW heterodimers at centromeres to form the tetrameric CENP-T-W-S-X complex. Forms a discrete complex with FANCM and CENPX, called FANCM-MHF; this interaction, probably mediated by direct binding between CENPS and FANCM, leads to synergistic activation of double-stranded DNA binding and strongly stimulates FANCM-mediated DNA remodeling. Recruited by FANCM to the Fanconi anemia (FA) core complex, which consists of CENPS, CENPX, FANCA, FANCB, FANCC, FANCE, FANCF, FANCG, FANCL, FANCM, FAAP24 and FAAP100. The FA core complex associates with Bloom syndrome (BLM) complex, which consists of at least BLM, DNA topoisomerase 3-alpha (TOP3A), RMI1/BLAP75, RPA1/RPA70 and RPA2/RPA32. The super complex between FA and BLM is called BRAFT. Component of the CENPA-CAD complex, composed of CENPI, CENPK, CENPL, CENPO, CENPP, CENPQ, CENPR and CENPS. The CENPA-CAD complex is probably recruited on centromeres by the CENPA-NAC complex, at least composed of CENPA, CENPC, CENPH, CENPM, CENPN, CENPT and CENPU.

It localises to the nucleus. Its subcellular location is the chromosome. The protein localises to the centromere. The protein resides in the kinetochore. DNA-binding component of the Fanconi anemia (FA) core complex. Required for the normal activation of the FA pathway, leading to monoubiquitination of the FANCI-FANCD2 complex in response to DNA damage, cellular resistance to DNA cross-linking drugs, and prevention of chromosomal breakage. In complex with CENPX (MHF heterodimer), crucial cofactor for FANCM in both binding and ATP-dependent remodeling of DNA. Stabilizes FANCM. In complex with CENPX and FANCM (but not other FANC proteins), rapidly recruited to blocked forks and promotes gene conversion at blocked replication forks. In complex with CENPT, CENPW and CENPX (CENP-T-W-S-X heterotetramer), involved in the formation of a functional kinetochore outer plate, which is essential for kinetochore-microtubule attachment and faithful mitotic progression. As a component of MHF and CENP-T-W-S-X complexes, binds DNA and bends it to form a nucleosome-like structure. DNA-binding function is fulfilled in the presence of CENPX, with the following preference for DNA substates: Holliday junction &gt; double-stranded &gt; splay arm &gt; single-stranded. Does not bind DNA on its own. This Bos taurus (Bovine) protein is Centromere protein S (CENPS).